Consider the following 237-residue polypeptide: UPF0173 metal-dependent hydrolase HQ_3368A (237 aa).

This sequence belongs to the UPF0173 family.

This chain is UPF0173 metal-dependent hydrolase HQ_3368A, found in Haloquadratum walsbyi (strain DSM 16790 / HBSQ001).